The sequence spans 183 residues: Bifunctional protein PyrR (183 aa).

A PRPP-binding motif is present at residues 102–114 (VVLVDDVLYTGRT).

This sequence belongs to the purine/pyrimidine phosphoribosyltransferase family. PyrR subfamily. Homodimer and homohexamer; in equilibrium.

The catalysed reaction is UMP + diphosphate = 5-phospho-alpha-D-ribose 1-diphosphate + uracil. Its function is as follows. Regulates transcriptional attenuation of the pyrimidine nucleotide (pyr) operon by binding in a uridine-dependent manner to specific sites on pyr mRNA. This disrupts an antiterminator hairpin in the RNA and favors formation of a downstream transcription terminator, leading to a reduced expression of downstream genes. In terms of biological role, also displays a weak uracil phosphoribosyltransferase activity which is not physiologically significant. This Listeria monocytogenes serotype 4a (strain HCC23) protein is Bifunctional protein PyrR.